We begin with the raw amino-acid sequence, 273 residues long: Type IV secretion system protein PtlF (273 aa).

The first 20 residues, 1–20 (MMAARMMAAGLAATALSAHA), serve as a signal peptide directing secretion.

This sequence belongs to the TrbG/VirB9 family. In terms of assembly, forms a complex with PtlI.

Its subcellular location is the cell outer membrane. Functionally, component of the type IV secretion system ptl required for secretion of assembled pertussis toxin (PTX) through the outer membrane. This Bordetella pertussis (strain Tohama I / ATCC BAA-589 / NCTC 13251) protein is Type IV secretion system protein PtlF (ptlF).